The following is a 114-amino-acid chain: Histone H3-3 (114 aa).

Positions 1–17 are enriched in basic residues; it reads NTGGKAPRKHIAHKQAK. The disordered stretch occupies residues 1–32; the sequence is NTGGKAPRKHIAHKQAKKSSAAAATGGVKKPH. Low complexity predominate over residues 18–28; it reads KSSAAAATGGV.

Belongs to the histone H3 family. The nucleosome is a histone octamer containing two molecules each of H2A, H2B, H3 and H4 assembled in one H3-H4 heterotetramer and two H2A-H2B heterodimers. The octamer wraps approximately 147 bp of DNA.

It is found in the nucleus. The protein resides in the chromosome. Functionally, core component of nucleosome. Nucleosomes wrap and compact DNA into chromatin, limiting DNA accessibility to the cellular machineries which require DNA as a template. Histones thereby play a central role in transcription regulation, DNA repair, DNA replication and chromosomal stability. DNA accessibility is regulated via a complex set of post-translational modifications of histones, also called histone code, and nucleosome remodeling. The protein is Histone H3-3 (H3-3) of Stylonychia lemnae (Ciliate).